Here is a 395-residue protein sequence, read N- to C-terminus: S-adenosylmethionine synthase (395 aa).

An ATP-binding site is contributed by His-16. Mg(2+) is bound at residue Asp-18. Glu-44 contacts K(+). 2 residues coordinate L-methionine: Glu-57 and Gln-100. Residues 100–110 are flexible loop; the sequence is QSPDIAQGVDR. ATP is bound by residues 167–169, 233–234, Asp-242, 248–249, Ala-265, and Lys-269; these read DAK, RF, and RK. Asp-242 contacts L-methionine. Lys-273 is a binding site for L-methionine.

This sequence belongs to the AdoMet synthase family. Homotetramer; dimer of dimers. The cofactor is Mg(2+). K(+) is required as a cofactor.

The protein resides in the cytoplasm. It catalyses the reaction L-methionine + ATP + H2O = S-adenosyl-L-methionine + phosphate + diphosphate. The protein operates within amino-acid biosynthesis; S-adenosyl-L-methionine biosynthesis; S-adenosyl-L-methionine from L-methionine: step 1/1. Functionally, catalyzes the formation of S-adenosylmethionine (AdoMet) from methionine and ATP. The overall synthetic reaction is composed of two sequential steps, AdoMet formation and the subsequent tripolyphosphate hydrolysis which occurs prior to release of AdoMet from the enzyme. This Burkholderia ambifaria (strain MC40-6) protein is S-adenosylmethionine synthase.